Reading from the N-terminus, the 448-residue chain is Asparagine--tRNA ligase (448 aa).

Belongs to the class-II aminoacyl-tRNA synthetase family. Homodimer.

Its subcellular location is the cytoplasm. The enzyme catalyses tRNA(Asn) + L-asparagine + ATP = L-asparaginyl-tRNA(Asn) + AMP + diphosphate + H(+). This Streptococcus mutans serotype c (strain ATCC 700610 / UA159) protein is Asparagine--tRNA ligase.